A 37-amino-acid chain; its full sequence is Large ribosomal subunit protein bL36c (37 aa).

Belongs to the bacterial ribosomal protein bL36 family.

The protein resides in the plastid. Its subcellular location is the chloroplast. The polypeptide is Large ribosomal subunit protein bL36c (Populus alba (White poplar)).